Reading from the N-terminus, the 226-residue chain is ATP synthase F(0) complex subunit a (226 aa).

A run of 6 helical transmembrane segments spans residues 13–33 (VILG…LISW), 69–89 (WALL…LGLL), 97–117 (TQLS…VIMA), 138–158 (IPVL…ALGV), 179–199 (FVLL…LFLL), and 201–221 (LLEI…LSLY).

It belongs to the ATPase A chain family. As to quaternary structure, component of the ATP synthase complex composed at least of ATP5F1A/subunit alpha, ATP5F1B/subunit beta, ATP5MC1/subunit c (homooctomer), MT-ATP6/subunit a, MT-ATP8/subunit 8, ATP5ME/subunit e, ATP5MF/subunit f, ATP5MG/subunit g, ATP5MK/subunit k, ATP5MJ/subunit j, ATP5F1C/subunit gamma, ATP5F1D/subunit delta, ATP5F1E/subunit epsilon, ATP5PF/subunit F6, ATP5PB/subunit b, ATP5PD/subunit d, ATP5PO/subunit OSCP. ATP synthase complex consists of a soluble F(1) head domain (subunits alpha(3) and beta(3)) - the catalytic core - and a membrane F(0) domain - the membrane proton channel (subunits c, a, 8, e, f, g, k and j). These two domains are linked by a central stalk (subunits gamma, delta, and epsilon) rotating inside the F1 region and a stationary peripheral stalk (subunits F6, b, d, and OSCP). Interacts with DNAJC30; interaction is direct.

It localises to the mitochondrion inner membrane. It catalyses the reaction H(+)(in) = H(+)(out). Its function is as follows. Subunit a, of the mitochondrial membrane ATP synthase complex (F(1)F(0) ATP synthase or Complex V) that produces ATP from ADP in the presence of a proton gradient across the membrane which is generated by electron transport complexes of the respiratory chain. ATP synthase complex consist of a soluble F(1) head domain - the catalytic core - and a membrane F(1) domain - the membrane proton channel. These two domains are linked by a central stalk rotating inside the F(1) region and a stationary peripheral stalk. During catalysis, ATP synthesis in the catalytic domain of F(1) is coupled via a rotary mechanism of the central stalk subunits to proton translocation. With the subunit c (ATP5MC1), forms the proton-conducting channel in the F(0) domain, that contains two crucial half-channels (inlet and outlet) that facilitate proton movement from the mitochondrial intermembrane space (IMS) into the matrix. Protons are taken up via the inlet half-channel and released through the outlet half-channel, following a Grotthuss mechanism. This is ATP synthase F(0) complex subunit a from Xenopus laevis (African clawed frog).